A 965-amino-acid polypeptide reads, in one-letter code: Serine/threonine-protein kinase tousled-like 1 (965 aa).

Disordered regions lie at residues 1–22 (MSML…GGER), 35–72 (PQNK…ATGD), 95–120 (QNSS…TRSS), 172–292 (NHQQ…KQER), 320–402 (QNQG…QSGR), and 538–576 (RKPL…DDAI). Gly residues predominate over residues 10-21 (VAGGGSSSGGGE). The span at 42–52 (TVQSSGSSSNH) shows a compositional bias: polar residues. Low complexity predominate over residues 172–231 (NHQQQMQQMHYHQQQQQYQQQQAQHHQMYAPQIQQQQQQPQQQSQQQSAQQPQQSSAALQ). 2 stretches are compositionally biased toward polar residues: residues 233-244 (VNESSNLSSAGS) and 320-341 (QNQG…SYDS). The segment covering 342-355 (QQQQPQMNQHEMQN) has biased composition (low complexity). The span at 365–381 (LGVNNRGTPTPTQQQHY) shows a compositional bias: polar residues. Positions 382 to 401 (SSDSNSNSNQSPPGQGNQSG) are enriched in low complexity. The span at 552–572 (AVNSQNDSNGMQPSTSSNTNG) shows a compositional bias: polar residues. The residue at position 634 (serine 634) is a Phosphoserine. The 278-residue stretch at 651–928 (YLMLNLLGKG…VFELAKHELF (278 aa)) folds into the Protein kinase domain. Residues 657 to 665 (LGKGGFSEV) and lysine 680 each bind ATP. The active-site Proton acceptor is aspartate 781.

Belongs to the protein kinase superfamily. Ser/Thr protein kinase family. In terms of assembly, interacts with air-2. In terms of processing, autophosphorylates in vitro. Phosphorylation on Ser-634 by air-2 enhances catalytic activity.

Its subcellular location is the nucleus. It catalyses the reaction L-seryl-[protein] + ATP = O-phospho-L-seryl-[protein] + ADP + H(+). It carries out the reaction L-threonyl-[protein] + ATP = O-phospho-L-threonyl-[protein] + ADP + H(+). Functionally, essential for appropriate transcription during embryonic development. May act during transcription elongation to activate the RNA polymerase II large subunit (ama-1) by phosphorylating the Ser-2 residues of the C-terminal domain 7-residue repeats. Does not phosphorylate histone H3. This Caenorhabditis elegans protein is Serine/threonine-protein kinase tousled-like 1 (tlk-1).